The following is a 353-amino-acid chain: MDQMLSPNFSIPSIGTPLHQMEADQQIVANPVYHPPAVSQPDSLMPAPGSSSVQHQQQQQQSDASGGSGLFGHEPSLPLAHKQMQSYQPSASYQQQQQQQQLQSQAPGGGGSTPQSMMQPQTPQSMMAHMMPMSERSVGGSGAGGGGDALSNIHQTMGPSTPMTPATPGSADPGIVPQLQNIVSTVNLCCKLDLKKIALHARNAEYNPKRFAAVIMRIREPRTTALIFSSGKMVCTGAKSEDDSRLAARKYARIIQKLGFPAKFLDFKIQNMVGSCDVKFPIRLEGLVLTHCNFSSYEPELFPGLIYRMVRPRIVLLIFVSGKVVLTGAKVRQEIYDAFDKIFPILKKFKKQS.

Positions Q20–Q121 are disordered. Composition is skewed to low complexity over residues G49 to S65 and Q85 to A106. Tandem repeats lie at residues L179–I255 and I269–L346.

This sequence belongs to the TBP family. Belongs to the TFIID complex which is composed of TATA binding protein (Tbp) and a number of TBP-associated factors (Tafs). Binds DNA as monomer. Interacts with TFIIA-L heterotrimer. Interacts with Taf1, Taf2, Taf5 and Taf12.

The protein resides in the nucleus. Its function is as follows. General transcription factor that functions at the core of the DNA-binding multiprotein factor TFIID. Binding of TFIID to the TATA box is the initial transcriptional step of the pre-initiation complex (PIC), playing a role in the activation of eukaryotic genes transcribed by RNA polymerase II. This is TATA-box-binding protein (Tbp) from Drosophila melanogaster (Fruit fly).